The following is a 111-amino-acid chain: Large ribosomal subunit protein uL22 (111 aa).

The protein belongs to the universal ribosomal protein uL22 family. As to quaternary structure, part of the 50S ribosomal subunit.

In terms of biological role, this protein binds specifically to 23S rRNA; its binding is stimulated by other ribosomal proteins, e.g. L4, L17, and L20. It is important during the early stages of 50S assembly. It makes multiple contacts with different domains of the 23S rRNA in the assembled 50S subunit and ribosome. Its function is as follows. The globular domain of the protein is located near the polypeptide exit tunnel on the outside of the subunit, while an extended beta-hairpin is found that lines the wall of the exit tunnel in the center of the 70S ribosome. In Stenotrophomonas maltophilia (strain R551-3), this protein is Large ribosomal subunit protein uL22.